The sequence spans 373 residues: Histidinol-phosphate aminotransferase (373 aa).

The residue at position 230 (Lys-230) is an N6-(pyridoxal phosphate)lysine.

Belongs to the class-II pyridoxal-phosphate-dependent aminotransferase family. Histidinol-phosphate aminotransferase subfamily. Homodimer. Requires pyridoxal 5'-phosphate as cofactor.

It catalyses the reaction L-histidinol phosphate + 2-oxoglutarate = 3-(imidazol-4-yl)-2-oxopropyl phosphate + L-glutamate. It functions in the pathway amino-acid biosynthesis; L-histidine biosynthesis; L-histidine from 5-phospho-alpha-D-ribose 1-diphosphate: step 7/9. The polypeptide is Histidinol-phosphate aminotransferase (Synechococcus sp. (strain ATCC 27144 / PCC 6301 / SAUG 1402/1) (Anacystis nidulans)).